The sequence spans 92 residues: Small ribosomal subunit protein uS19 (92 aa).

This sequence belongs to the universal ribosomal protein uS19 family.

Protein S19 forms a complex with S13 that binds strongly to the 16S ribosomal RNA. This Bartonella quintana (strain Toulouse) (Rochalimaea quintana) protein is Small ribosomal subunit protein uS19.